A 133-amino-acid polypeptide reads, in one-letter code: Small ribosomal subunit protein uS8 (133 aa).

The protein belongs to the universal ribosomal protein uS8 family. Part of the 30S ribosomal subunit.

Its function is as follows. One of the primary rRNA binding proteins, it binds directly to 16S rRNA central domain where it helps coordinate assembly of the platform of the 30S subunit. This is Small ribosomal subunit protein uS8 from Saccharolobus solfataricus (strain ATCC 35092 / DSM 1617 / JCM 11322 / P2) (Sulfolobus solfataricus).